A 366-amino-acid polypeptide reads, in one-letter code: MTLEIFEYLEKYDYEQVVFCQDKESGLKAIIAIHDTTLGPALGGTRMWTYDSEEAAIEDALRLAKGMTYKNAAAGLNLGGAKTVIIGDPRKDKSEAMFRALGRYIQGLNGRYITAEDVGTTVDDMDIIHEETDFVTGISPSFGSSGNPSPVTAYGVYRGMKAAAKEAFGTDNLEGKVIAVQGVGNVAYHLCKHLHAEGAKLIVTDINKEAVQRAVEEFGASAVEPNEIYGVECDIYAPCALGATVNDETIPQLKAKVIAGSANNQLKEDRHGDIIHEMGIVYAPDYVINAGGVINVADELYGYNRERALKRVESIYDTIAKVIEISKRDGIATYVAADRLAEERIASLKNSRSTYLRNGHDIISRR.

Lys82 is a catalytic residue. An NAD(+)-binding site is contributed by 182–188 (GVGNVAY).

The protein belongs to the Glu/Leu/Phe/Val dehydrogenases family.

It carries out the reaction L-leucine + NAD(+) + H2O = 4-methyl-2-oxopentanoate + NH4(+) + NADH + H(+). The protein operates within amino-acid degradation; L-leucine degradation; 4-methyl-2-oxopentanoate from L-leucine (dehydrogenase route): step 1/1. Its function is as follows. Catalyzes the reversible deamination of L-leucine to 4-methyl-2-oxopentanoate. The sequence is that of Leucine dehydrogenase (ldh) from Bacillus cereus.